The chain runs to 441 residues: Gamma-glutamyl phosphate reductase (441 aa).

It belongs to the gamma-glutamyl phosphate reductase family.

It localises to the cytoplasm. The catalysed reaction is L-glutamate 5-semialdehyde + phosphate + NADP(+) = L-glutamyl 5-phosphate + NADPH + H(+). It functions in the pathway amino-acid biosynthesis; L-proline biosynthesis; L-glutamate 5-semialdehyde from L-glutamate: step 2/2. Catalyzes the NADPH-dependent reduction of L-glutamate 5-phosphate into L-glutamate 5-semialdehyde and phosphate. The product spontaneously undergoes cyclization to form 1-pyrroline-5-carboxylate. This is Gamma-glutamyl phosphate reductase from Hydrogenobaculum sp. (strain Y04AAS1).